The primary structure comprises 448 residues: uncharacterized protein (448 aa).

Residues 1-50 (MAPEIFVKFKCASRDIKLLWASVFLRLLSYGLTNQVLTLFLNAINMTEDK) lie on the Extracellular side of the membrane. The helical transmembrane segment at 51–71 (IGLFMSLTLAGDVICSYILTW) threads the bilayer. Residues 72–93 (YADSWGRRRVLVYGCAMMLLSG) lie on the Cytoplasmic side of the membrane. Residues 94-114 (LVFSFSENFTLLLVFAIFGVI) traverse the membrane as a helical segment. The Extracellular portion of the chain corresponds to 115–146 (SPSSDEVGPFKSIEEAMIAHLSPHNARPEIYA). The helical transmembrane segment at 147-167 (IHALVGTIGSALGAIICGIFV) threads the bilayer. Residues 168–184 (DLLKRTGLAATDLQCYK) are Cytoplasmic-facing. Residues 185-205 (LVFLLYAFFAFCKMVIMLLLS) traverse the membrane as a helical segment. At 206–260 (DATELDGHYEHTDCNEETAEPLDVNDETAPLMRQATHPEERSNKLSKETVSVLMK) the chain is on the extracellular side. Residues 261–281 (LLVIFMVDSLGSGFMTSGWMV) form a helical membrane-spanning segment. The Cytoplasmic portion of the chain corresponds to 282–287 (YYYSKQ). Residues 288–308 (FLMGSLALGTLFFITQLVMAS) traverse the membrane as a helical segment. The Extracellular segment spans residues 309–333 (STIPSSIIARCFGPVRATLLVQIPS). A helical transmembrane segment spans residues 334–354 (GIFSILIPMAKNYLPLSILFL). The Cytoplasmic segment spans residues 355 to 386 (NLHFATTAMDVTPRQILLTNIIKPRDLTKVMG). 386-393 (GVVNIGKT) contributes to the ATP binding site. The helical transmembrane segment at 387 to 407 (VVNIGKTFARCVGPIFTGILA) threads the bilayer. At 408-416 (NNNYLWLCY) the chain is on the extracellular side. Residues 417 to 437 (IISGSLVITADLILACMFLGV) form a helical membrane-spanning segment. Over 438–448 (DAKIKKQMNRH) the chain is Cytoplasmic.

It localises to the membrane. This is an uncharacterized protein from Saccharomyces cerevisiae (strain ATCC 204508 / S288c) (Baker's yeast).